A 285-amino-acid polypeptide reads, in one-letter code: Diaminopimelate epimerase (285 aa).

Residues Asn15 and Asn68 each coordinate substrate. Cys77 functions as the Proton donor in the catalytic mechanism. Substrate is bound by residues 78–79 (GN), Asn165, Asn201, and 219–220 (ER). Cys228 functions as the Proton acceptor in the catalytic mechanism. 229–230 (GT) lines the substrate pocket.

The protein belongs to the diaminopimelate epimerase family. In terms of assembly, homodimer.

It localises to the cytoplasm. It catalyses the reaction (2S,6S)-2,6-diaminopimelate = meso-2,6-diaminopimelate. The protein operates within amino-acid biosynthesis; L-lysine biosynthesis via DAP pathway; DL-2,6-diaminopimelate from LL-2,6-diaminopimelate: step 1/1. Functionally, catalyzes the stereoinversion of LL-2,6-diaminopimelate (L,L-DAP) to meso-diaminopimelate (meso-DAP), a precursor of L-lysine and an essential component of the bacterial peptidoglycan. This Synechococcus sp. (strain JA-3-3Ab) (Cyanobacteria bacterium Yellowstone A-Prime) protein is Diaminopimelate epimerase.